Reading from the N-terminus, the 688-residue chain is Eukaryotic translation initiation factor 3 subunit B (688 aa).

Residues M1 to P28 are disordered. Residues Y9–F25 are compositionally biased toward acidic residues. Positions N57–D141 constitute an RRM domain. 6 WD repeats span residues R208–K246, F247–S287, D291–K329, I332–E367, E440–M482, and G527–N572. Positions D612–N643 form a coiled coil.

This sequence belongs to the eIF-3 subunit B family. As to quaternary structure, component of the eukaryotic translation initiation factor 3 (eIF-3) complex.

The protein resides in the cytoplasm. In terms of biological role, RNA-binding component of the eukaryotic translation initiation factor 3 (eIF-3) complex, which is involved in protein synthesis of a specialized repertoire of mRNAs and, together with other initiation factors, stimulates binding of mRNA and methionyl-tRNAi to the 40S ribosome. The eIF-3 complex specifically targets and initiates translation of a subset of mRNAs involved in cell proliferation. The chain is Eukaryotic translation initiation factor 3 subunit B from Culex quinquefasciatus (Southern house mosquito).